Reading from the N-terminus, the 448-residue chain is Fibulin-5 (448 aa).

Residues 1-23 (MPGLKRILTVTILALWLPHPGNA) form the signal peptide. An EGF-like 1; calcium-binding domain is found at 42–82 (DIDECRTIPEACRGDMMCVNQNGGYLCIPRTNPVYRGPYSN). Intrachain disulfides connect Cys46–Cys59, Cys53–Cys68, Cys131–Cys144, Cys138–Cys153, Cys155–Cys166, Cys172–Cys181, Cys177–Cys190, Cys192–Cys205, Cys211–Cys221, Cys217–Cys230, Cys232–Cys245, Cys251–Cys262, Cys258–Cys271, Cys273–Cys286, Cys292–Cys305, Cys299–Cys314, and Cys320–Cys332. The Cell attachment site motif lies at 54-56 (RGD). An EGF-like 2; calcium-binding domain is found at 127 to 167 (DVDECATDSHQCNPTQICINTEGGYTCSCTDGYWLLEGQCL). The EGF-like 3; calcium-binding domain occupies 168-206 (DIDECRYGYCQQLCANVPGSYSCTCNPGFTLNDDGRSCQ). The EGF-like 4; calcium-binding domain occupies 207 to 246 (DVNECETENPCVQTCVNTYGSFICRCDPGYELEEDGIHCS). Residues 245–448 (CSDMDECSFS…LRIYVSQYPF (204 aa)) form an interaction with LOXL1 region. The region spanning 247 to 287 (DMDECSFSEFLCQHECVNQPGSYFCSCPPGYVLLEDNRSCQ) is the EGF-like 5; calcium-binding domain. N-linked (GlcNAc...) asparagine glycosylation is found at Asn283 and Asn296. Positions 288 to 333 (DINECEHRNHTCTPLQTCYNLQGGFKCIDPIVCEEPYLLIGDNRCM) constitute an EGF-like 6; calcium-binding domain.

Belongs to the fibulin family. In terms of assembly, homodimer. Monomer, homodimerizes in presence of Ca(2+). Interacts with ELN. Interacts (via N-terminus) with the integrins ITGAV/ITGB3, ITGAV/ITGB5 and ITGA9/ITGB1. Interacts with FBN1 (via N-terminal domain). Forms a ternary complex with ELN and FBN1. Interacts with EFEMP2 with moderate affinity. Interacts with LOXL1. N-glycosylated.

It localises to the secreted. The protein resides in the extracellular space. It is found in the extracellular matrix. Essential for elastic fiber formation, is involved in the assembly of continuous elastin (ELN) polymer and promotes the interaction of microfibrils and ELN. Stabilizes and organizes elastic fibers in the skin, lung and vasculature. Promotes adhesion of endothelial cells through interaction of integrins and the RGD motif. Vascular ligand for integrin receptors which may play a role in vascular development and remodeling. May act as an adapter that mediates the interaction between FBN1 and ELN. In Rattus norvegicus (Rat), this protein is Fibulin-5 (Fbln5).